The sequence spans 565 residues: DNA-directed RNA polymerase subunit beta C-terminal section (565 aa).

The protein belongs to the RNA polymerase beta chain family. As to quaternary structure, in plastids the minimal PEP RNA polymerase catalytic core is composed of four subunits: alpha, beta, beta', and beta''. When a (nuclear-encoded) sigma factor is associated with the core the holoenzyme is formed, which can initiate transcription.

The protein localises to the plastid. It is found in the chloroplast. It catalyses the reaction RNA(n) + a ribonucleoside 5'-triphosphate = RNA(n+1) + diphosphate. Its function is as follows. DNA-dependent RNA polymerase catalyzes the transcription of DNA into RNA using the four ribonucleoside triphosphates as substrates. In Tetradesmus obliquus (Green alga), this protein is DNA-directed RNA polymerase subunit beta C-terminal section (rpoB2).